The following is a 290-amino-acid chain: UPF0761 membrane protein YihY (290 aa).

Transmembrane regions (helical) follow at residues 44 to 64 (LLSL…FPMF), 104 to 124 (VGAC…DSAL), 140 to 160 (FAVY…SLAI), 183 to 203 (IFPL…VPTI), 210 to 230 (AIVG…GFAL), and 244 to 264 (VLAV…IVLL).

Belongs to the UPF0761 family.

It is found in the cell inner membrane. The protein is UPF0761 membrane protein YihY of Shigella boydii serotype 4 (strain Sb227).